Reading from the N-terminus, the 154-residue chain is Myoglobin (154 aa).

The Globin domain occupies 2-148 (GLSDGEWQLV…FRNDIAAKYK (147 aa)). Position 4 is a phosphoserine (serine 4). A nitrite-binding site is contributed by histidine 65. Residue histidine 65 coordinates O2. Position 68 is a phosphothreonine (threonine 68). Histidine 94 lines the heme b pocket.

It belongs to the globin family. As to quaternary structure, monomeric.

It localises to the cytoplasm. Its subcellular location is the sarcoplasm. It catalyses the reaction Fe(III)-heme b-[protein] + nitric oxide + H2O = Fe(II)-heme b-[protein] + nitrite + 2 H(+). The catalysed reaction is H2O2 + AH2 = A + 2 H2O. In terms of biological role, monomeric heme protein which primary function is to store oxygen and facilitate its diffusion within muscle tissues. Reversibly binds oxygen through a pentacoordinated heme iron and enables its timely and efficient release as needed during periods of heightened demand. Depending on the oxidative conditions of tissues and cells, and in addition to its ability to bind oxygen, it also has a nitrite reductase activity whereby it regulates the production of bioactive nitric oxide. Under stress conditions, like hypoxia and anoxia, it also protects cells against reactive oxygen species thanks to its pseudoperoxidase activity. This is Myoglobin (MB) from Erinaceus europaeus (Western European hedgehog).